We begin with the raw amino-acid sequence, 143 residues long: AP-2 complex subunit sigma (143 aa).

The protein belongs to the adaptor complexes small subunit family. As to quaternary structure, adaptor protein complex 2 (AP-2) is a heterotetramer composed of two large adaptins (alpha-type subunit APL3 and beta-type subunit APL1), a medium chain (mu-type subunit APM4) and a small adaptin (sigma-type subunit APS2).

The protein localises to the cell membrane. The protein resides in the membrane. It is found in the coated pit. Functionally, component of the adaptor complexes which link clathrin to receptors in coated vesicles. Clathrin-associated protein complexes are believed to interact with the cytoplasmic tails of membrane proteins, leading to their selection and concentration. The chain is AP-2 complex subunit sigma (aps-2) from Neurospora crassa (strain ATCC 24698 / 74-OR23-1A / CBS 708.71 / DSM 1257 / FGSC 987).